The sequence spans 191 residues: Putative zinc metalloprotease MJ0611 (191 aa).

A helical membrane pass occupies residues 20-40; sequence AIAFIFSYPNFSILVFIISLI. Histidine 49 serves as a coordination point for Zn(2+). Glutamate 50 is an active-site residue. Histidine 53 provides a ligand contact to Zn(2+). A run of 4 helical transmembrane segments spans residues 73–93, 110–130, 133–153, and 171–191; these read LILG…PGAV, LAGP…MLIF, GSLL…LAGF, and PFIW…MMFW.

It belongs to the peptidase M50B family. It depends on Zn(2+) as a cofactor.

The protein resides in the cell membrane. This chain is Putative zinc metalloprotease MJ0611, found in Methanocaldococcus jannaschii (strain ATCC 43067 / DSM 2661 / JAL-1 / JCM 10045 / NBRC 100440) (Methanococcus jannaschii).